Reading from the N-terminus, the 1813-residue chain is Nonribosomal peptide synthetase 1 (1813 aa).

Residues 89-494 (EKARRDPSRQ…GRGDQQVKLR (406 aa)) are adenylation. A Carrier 1 domain is found at 624–699 (EPQSERERQL…ELAITLKHSD (76 aa)). Ser-660 bears the O-(pantetheine 4'-phosphoryl)serine mark. Positions 738–1159 (DVYPCTTLQE…LPMTDDELAE (422 aa)) are condensation 1. In terms of domain architecture, Carrier 2 spans 1282 to 1358 (QVTTPKQQKL…DMADIAKESL (77 aa)). Residue Ser-1319 is modified to O-(pantetheine 4'-phosphoryl)serine. The interval 1427–1806 (FYLDAAVDQS…STLFQTDVME (380 aa)) is condensation 2.

This sequence belongs to the NRP synthetase family.

The protein operates within siderophore biosynthesis. Nonribosomal peptide synthetase; part of the gene cluster that mediates the biosynthesis of hydroxamate-containing siderophores that play a critical role in virulence via intracellular iron acquisition during macrophage infection. This chain is Nonribosomal peptide synthetase 1, found in Ajellomyces capsulatus (Darling's disease fungus).